A 72-amino-acid polypeptide reads, in one-letter code: Probable transcription factor elt-4 (72 aa).

The GATA-type zinc-finger motif lies at 16–40 (CSNCNGTNTTLWRRKAEGDPVCNAC).

The protein localises to the nucleus. Probable transcription factor. Plays a role in regulating heme-dependent expression of heme transporter hrg-1. Modulates lifespan in a daf-16-dependent manner. The polypeptide is Probable transcription factor elt-4 (Caenorhabditis elegans).